Here is a 140-residue protein sequence, read N- to C-terminus: Large ribosomal subunit protein uL14 (140 aa).

The protein belongs to the universal ribosomal protein uL14 family. As to quaternary structure, part of the 50S ribosomal subunit. Forms a cluster with proteins L3 and L24e, part of which may contact the 16S rRNA in 2 intersubunit bridges.

Its function is as follows. Binds to 23S rRNA. Forms part of two intersubunit bridges in the 70S ribosome. In Staphylothermus marinus (strain ATCC 43588 / DSM 3639 / JCM 9404 / F1), this protein is Large ribosomal subunit protein uL14.